The sequence spans 436 residues: UPF0597 protein YhaM (436 aa).

It belongs to the UPF0597 family.

This Escherichia coli (strain SE11) protein is UPF0597 protein YhaM.